A 565-amino-acid polypeptide reads, in one-letter code: Hemagglutinin-neuraminidase (565 aa).

Residues 1-19 (MVAEDAPVRGTCRVLFRTT) lie on the Intravirion side of the membrane. A helical transmembrane segment spans residues 20–40 (TLLFLCTLLSLSISILYESLI). Over 41–565 (TQNQIMSQAG…VPFIRQVTLS (525 aa)) the chain is Virion surface. N-linked (GlcNAc...) asparagine; by host glycans are attached at residues N110 and N139. 3 cysteine pairs are disulfide-bonded: C161–C185, C175–C236, and C227–C240. The tract at residues 223 to 228 (NRKSCS) is involved in neuraminidase activity. N267 is a glycosylation site (N-linked (GlcNAc...) asparagine; by host). 3 cysteine pairs are disulfide-bonded: C333–C454, C365–C375, and C448–C458. N-linked (GlcNAc...) asparagine; by host glycosylation is present at N504. Cysteines 528 and 539 form a disulfide.

This sequence belongs to the paramyxoviruses hemagglutinin-neuraminidase family. Homotetramer; composed of disulfide-linked homodimers. Interacts with F protein trimer.

Its subcellular location is the virion membrane. The protein localises to the host cell membrane. It carries out the reaction Hydrolysis of alpha-(2-&gt;3)-, alpha-(2-&gt;6)-, alpha-(2-&gt;8)- glycosidic linkages of terminal sialic acid residues in oligosaccharides, glycoproteins, glycolipids, colominic acid and synthetic substrates.. Attaches the virus to sialic acid-containing cell receptors and thereby initiating infection. Binding of HN protein to the receptor induces a conformational change that allows the F protein to trigger virion/cell membranes fusion. Its function is as follows. Neuraminidase activity ensures the efficient spread of the virus by dissociating the mature virions from the neuraminic acid containing glycoproteins. This is Hemagglutinin-neuraminidase (HN) from Canis lupus familiaris (Dog).